We begin with the raw amino-acid sequence, 568 residues long: TNF receptor-associated factor 3 (568 aa).

A disordered region spans residues 1–28; it reads MESSKKMDSPGALQTNPPLKLHTDRSAG. Serine 9 carries the phosphoserine modification. A Glycyl cysteine thioester (Cys-Gly) (interchain with G-Cter in ubiquitin) cross-link involves residue cysteine 56. The segment at 68 to 77 adopts an RING-type zinc-finger fold; the sequence is CGHRFCESCM. Residue cysteine 124 forms a Glycyl cysteine thioester (Cys-Gly) (interchain with G-Cter in ubiquitin) linkage. 2 TRAF-type zinc fingers span residues 135–190 and 191–249; these read VHLK…IALQ and KHED…QQIK. Residue lysine 168 forms a Glycyl lysine isopeptide (Lys-Gly) (interchain with G-Cter in ubiquitin) linkage. A coiled-coil region spans residues 267–338; it reads SNSLEKKVSL…KLKELDKEIR (72 aa). A Glycyl lysine isopeptide (Lys-Gly) (interchain with G-Cter in ubiquitin) cross-link involves residue lysine 329. The interval 392-415 is (Microbial infection) Interaction with glycoprotein N of Andes and New York hantaviruses; it reads LSVHDIRLADMDLRFQVLETASYN. The MATH domain maps to 415–560; sequence NGVLIWKIRD…DDTIFIKVIV (146 aa).

This sequence belongs to the TNF receptor-associated factor family. A subfamily. In terms of assembly, homotrimer. Heterotrimer with TRAF2 and TRAF5. Interacts with LTBR/TNFRSF3, TNFRSF4, TNFRSF5/CD40, TNFRSF8/CD30, TNFRSF13C TNFRSF17/BCMA, TLR4 and EDAR. Interacts with MAP3K5, MAP3K14, TRAIP/TRIP, TDP2/TTRAP, TANK/ITRAF and TRAF3IP1. Interaction with TNFRSF5/CD40 is modulated by TANK/ITRAF, which competes for the same binding site. Interacts with TICAM1. Interacts with TRAFD1. Interacts with OTUB1, OTUB2 and OTUD5. Interacts with RNF216, OPTN and TBK1. Identified in a complex with TRAF2, MAP3K14 and BIRC3. Interacts with BIRC2 and BIRC3. Upon exposure to bacterial lipopolysaccharide (LPS), recruited to a transient complex containing TLR4, TRAF3, TRAF6, IKBKG, MAP3K7, MYD88, TICAM1, BIRC2, BIRC3 and UBE2N. Interacts (via RING-type zinc finger domain) with SRC. Interacts with CARD14. Interacts (via MATH domain) with PTPN22; the interaction promotes TRAF3 polyubiquitination. Interacts with MAVS. Directly interacts with DDX3X; this interaction stimulates TRAF3 'Lys-63' ubiquitination. Interacts with IRF3. Interacts with IKBKE in the course of Sendai virus infection. Interacts with TRIM35. Interacts with GAPDH; promoting TRAF3 ubiquitination. Interacts with PPP3CA and PPP3CB. Interacts with ATP1B1; promoting TRAF3 ubiquitination. Interacts with RALGDS. Interacts with FBXO11. (Microbial infection) Interacts (via N-terminus) with New York hantavirus glycoprotein N (via C-terminus); this interaction inhibits the formation of TRAF3-TBK1 complexes. As to quaternary structure, (Microbial infection) Interacts with Andes hantavirus glycoprotein N (via C-terminus); this interaction inhibits the formation of TRAF3-TBK1 complexes. In terms of assembly, (Microbial infection) Interacts with Tula hantavirus glycoprotein N (via C-terminus); this interaction inhibits the formation of TRAF3-TBK1 complexes. (Microbial infection) Interacts with Epstein-Barr virus protein LMP1. In terms of processing, undergoes 'Lys-48'-linked polyubiquitination, leading to its proteasomal degradation in response to signaling by TNFSF13B, TLR4 or through CD40. 'Lys-48'-linked polyubiquitinated form is deubiquitinated by OTUD7B, preventing TRAF3 proteolysis and over-activation of non-canonical NF-kappa-B. Undergoes 'Lys-63'-linked ubiquitination during early stages of virus infection, and 'Lys-48'-linked ubiquitination during later stages. Undergoes both 'Lys-48'-linked and 'Lys-63'-linked ubiquitination in response to TLR3 and TLR4 signaling. 'Lys-63'-linked ubiquitination can be mediated by TRIM35. Deubiquitinated by OTUB1, OTUB2 and OTUD5. Undergoes 'Lys-63'-linked deubiquitination by MYSM1 to terminate the pattern-recognition receptors/PRRs pathways. Also undergoes 'Lys-29'-linked ubiquitination on Cys-56 and Cys-124 by NEDD4L; leading to increased 'Lys-48'- and 'Lys-63'-linked ubiquitination as well as increased binding to TBK1. TLR4 signals emanating from bacteria containing vesicles trigger 'Lys-33'-linked polyubiquitination that promotes the assembly of the exocyst complex thereby connecting innate immune signaling to the cellular trafficking apparatus. Deubiquitinated by USP25 during viral infection, leading to TRAF3 stabilization and type I interferon production. Ubiquitinated at Lys-329 by the SCF(FBXL2) complex, leading to its degradation by the proteasome. 'Lys-63'-linked ubiquitination by FBXO11 in a NEDD8-dependent manner promotes the amplification of IFN-I signaling. Post-translationally, (Microbial infection) Cleaved by enterovirus D68 protease 2A; leading to inhibition of NF-kappa-B or IFN-beta triggered by TRAF3.

It is found in the cytoplasm. The protein resides in the endosome. Its subcellular location is the mitochondrion. The enzyme catalyses S-ubiquitinyl-[E2 ubiquitin-conjugating enzyme]-L-cysteine + [acceptor protein]-L-lysine = [E2 ubiquitin-conjugating enzyme]-L-cysteine + N(6)-ubiquitinyl-[acceptor protein]-L-lysine.. In terms of biological role, cytoplasmic E3 ubiquitin ligase that regulates various signaling pathways, such as the NF-kappa-B, mitogen-activated protein kinase (MAPK) and interferon regulatory factor (IRF) pathways, and thus controls a lot of biological processes in both immune and non-immune cell types. In TLR and RLR signaling pathways, acts as an E3 ubiquitin ligase promoting the synthesis of 'Lys-63'-linked polyubiquitin chains on several substrates such as ASC that lead to the activation of the type I interferon response or the inflammasome. Following the activation of certain TLRs such as TLR4, acts as a negative NF-kappa-B regulator, possibly to avoid unregulated inflammatory response, and its degradation via 'Lys-48'-linked polyubiquitination is required for MAPK activation and production of inflammatory cytokines. Alternatively, when TLR4 orchestrates bacterial expulsion, TRAF3 undergoes 'Lys-33'-linked polyubiquitination and subsequently binds to RALGDS, mobilizing the exocyst complex to rapidly expel intracellular bacteria back for clearance. Also acts as a constitutive negative regulator of the alternative NF-kappa-B pathway, which controls B-cell survival and lymphoid organ development. Required for normal antibody isotype switching from IgM to IgG. Plays a role T-cell dependent immune responses. Down-regulates proteolytic processing of NFKB2, and thereby inhibits non-canonical activation of NF-kappa-B. Promotes ubiquitination and proteasomal degradation of MAP3K14. This chain is TNF receptor-associated factor 3, found in Homo sapiens (Human).